Here is a 140-residue protein sequence, read N- to C-terminus: MKAVQRIFQTGRFSVAAGPSVRFQAGFLAANRQVRFSSNHGVSLEEINTKYNDFFSNVQDQFELQRGLNNCFAYDIVPSSDVIEQALRAARRVNDFPTAVRIFEGIKVKLPTKEQYQAYVKELKPVCNELGIVLKEDLFK.

Belongs to the cytochrome c oxidase subunit 5A family. As to quaternary structure, component of the cytochrome c oxidase (complex IV, CIV), a multisubunit enzyme composed of a catalytic core of 3 subunits and several supernumerary subunits. The complex exists as a monomer or a dimer and forms supercomplexes (SCs) in the inner mitochondrial membrane with ubiquinol-cytochrome c oxidoreductase (cytochrome b-c1 complex, complex III, CIII).

The protein localises to the mitochondrion inner membrane. The protein operates within energy metabolism; oxidative phosphorylation. Functionally, component of the cytochrome c oxidase, the last enzyme in the mitochondrial electron transport chain which drives oxidative phosphorylation. The respiratory chain contains 3 multisubunit complexes succinate dehydrogenase (complex II, CII), ubiquinol-cytochrome c oxidoreductase (cytochrome b-c1 complex, complex III, CIII) and cytochrome c oxidase (complex IV, CIV), that cooperate to transfer electrons derived from NADH and succinate to molecular oxygen, creating an electrochemical gradient over the inner membrane that drives transmembrane transport and the ATP synthase. Cytochrome c oxidase is the component of the respiratory chain that catalyzes the reduction of oxygen to water. Electrons originating from reduced cytochrome c in the intermembrane space (IMS) are transferred via the dinuclear copper A center (CU(A)) of subunit 2 and heme A of subunit 1 to the active site in subunit 1, a binuclear center (BNC) formed by heme A3 and copper B (CU(B)). The BNC reduces molecular oxygen to 2 water molecules using 4 electrons from cytochrome c in the IMS and 4 protons from the mitochondrial matrix. The polypeptide is Cytochrome c oxidase subunit 6, mitochondrial (cox6) (Schizosaccharomyces pombe (strain 972 / ATCC 24843) (Fission yeast)).